Here is a 597-residue protein sequence, read N- to C-terminus: 2-isopropylmalate synthase (597 aa).

Residues 1–80 are unknown; that stretch reads MQLDIDRLVA…QKNESLERTE (80 aa). In terms of domain architecture, Pyruvate carboxyltransferase spans 87–349; the sequence is VIIFDTTLRD…ETGIDTTQIV (263 aa). Positions 87 to 349 are 2-isopropylmalate synthase; sequence VIIFDTTLRD…ETGIDTTQIV (263 aa). D96, H284, H286, and N320 together coordinate Mn(2+). Positions 475–597 are regulatory domain; the sequence is KFISQKISTE…KPKAQGSGTI (123 aa).

Belongs to the alpha-IPM synthase/homocitrate synthase family. LeuA type 1 subfamily. Homodimer. Requires Mn(2+) as cofactor.

The protein resides in the cytoplasm. It catalyses the reaction 3-methyl-2-oxobutanoate + acetyl-CoA + H2O = (2S)-2-isopropylmalate + CoA + H(+). It functions in the pathway amino-acid biosynthesis; L-leucine biosynthesis; L-leucine from 3-methyl-2-oxobutanoate: step 1/4. Its function is as follows. Catalyzes the condensation of the acetyl group of acetyl-CoA with 3-methyl-2-oxobutanoate (2-ketoisovalerate) to form 3-carboxy-3-hydroxy-4-methylpentanoate (2-isopropylmalate). The chain is 2-isopropylmalate synthase from Neisseria gonorrhoeae (strain ATCC 700825 / FA 1090).